We begin with the raw amino-acid sequence, 208 residues long: Orotidine 5'-phosphate decarboxylase (208 aa).

Residues Asp7, Lys29, 57-66 (DLKLADIPNT), Ser109, 162-172 (PGIGAQGGKAK), Gly185, and Arg186 contribute to the substrate site. Catalysis depends on Lys59, which acts as the Proton donor.

The protein belongs to the OMP decarboxylase family. Type 1 subfamily. Homodimer.

The enzyme catalyses orotidine 5'-phosphate + H(+) = UMP + CO2. The protein operates within pyrimidine metabolism; UMP biosynthesis via de novo pathway; UMP from orotate: step 2/2. Its function is as follows. Catalyzes the decarboxylation of orotidine 5'-monophosphate (OMP) to uridine 5'-monophosphate (UMP). In Pyrococcus abyssi (strain GE5 / Orsay), this protein is Orotidine 5'-phosphate decarboxylase.